A 304-amino-acid polypeptide reads, in one-letter code: Acetyl-coenzyme A carboxylase carboxyl transferase subunit beta (304 aa).

The 270-residue stretch at 23–292 (VWTKCDSCGQ…PNPEAPREGV (270 aa)) folds into the CoA carboxyltransferase N-terminal domain. Residues cysteine 27, cysteine 30, cysteine 46, and cysteine 49 each coordinate Zn(2+). The C4-type zinc-finger motif lies at 27 to 49 (CDSCGQVLYRAELERNLEVCPKC). The tract at residues 284-304 (NPEAPREGVVVPPVPDQEPEA) is disordered. Over residues 295 to 304 (PPVPDQEPEA) the composition is skewed to pro residues.

This sequence belongs to the AccD/PCCB family. In terms of assembly, acetyl-CoA carboxylase is a heterohexamer composed of biotin carboxyl carrier protein (AccB), biotin carboxylase (AccC) and two subunits each of ACCase subunit alpha (AccA) and ACCase subunit beta (AccD). The cofactor is Zn(2+).

The protein localises to the cytoplasm. It carries out the reaction N(6)-carboxybiotinyl-L-lysyl-[protein] + acetyl-CoA = N(6)-biotinyl-L-lysyl-[protein] + malonyl-CoA. Its pathway is lipid metabolism; malonyl-CoA biosynthesis; malonyl-CoA from acetyl-CoA: step 1/1. Functionally, component of the acetyl coenzyme A carboxylase (ACC) complex. Biotin carboxylase (BC) catalyzes the carboxylation of biotin on its carrier protein (BCCP) and then the CO(2) group is transferred by the transcarboxylase to acetyl-CoA to form malonyl-CoA. The polypeptide is Acetyl-coenzyme A carboxylase carboxyl transferase subunit beta (Escherichia coli O139:H28 (strain E24377A / ETEC)).